The primary structure comprises 471 residues: Sulfate adenylyltransferase subunit 1 (471 aa).

In terms of domain architecture, tr-type G spans 24–240 (KSLLRFLTCG…ESADVERELE (217 aa)). Residues 33 to 40 (GSVDDGKS) form a G1 region. Position 33 to 40 (33 to 40 (GSVDDGKS)) interacts with GTP. The tract at residues 91-95 (GITID) is G2. The G3 stretch occupies residues 112-115 (DTPG). GTP is bound by residues 112–116 (DTPGH) and 167–170 (NKMD). The interval 167 to 170 (NKMD) is G4. The G5 stretch occupies residues 204 to 206 (SAL).

It belongs to the TRAFAC class translation factor GTPase superfamily. Classic translation factor GTPase family. CysN/NodQ subfamily. As to quaternary structure, heterodimer composed of CysD, the smaller subunit, and CysN.

The catalysed reaction is sulfate + ATP + H(+) = adenosine 5'-phosphosulfate + diphosphate. Its pathway is sulfur metabolism; hydrogen sulfide biosynthesis; sulfite from sulfate: step 1/3. In terms of biological role, with CysD forms the ATP sulfurylase (ATPS) that catalyzes the adenylation of sulfate producing adenosine 5'-phosphosulfate (APS) and diphosphate, the first enzymatic step in sulfur assimilation pathway. APS synthesis involves the formation of a high-energy phosphoric-sulfuric acid anhydride bond driven by GTP hydrolysis by CysN coupled to ATP hydrolysis by CysD. This Aeromonas salmonicida (strain A449) protein is Sulfate adenylyltransferase subunit 1.